A 409-amino-acid polypeptide reads, in one-letter code: Serine/threonine transporter SstT (409 aa).

Helical transmembrane passes span 24-44 (LALG…AGLF), 48-68 (FVGA…AATI), 82-102 (IIVL…IAGM), 142-162 (AIAN…GAAL), 194-214 (LGIF…ALAG), 218-238 (LLAV…PAIV), 292-312 (IPLG…VLAM), and 319-339 (GITV…VSAC).

Belongs to the dicarboxylate/amino acid:cation symporter (DAACS) (TC 2.A.23) family.

It is found in the cell inner membrane. It catalyses the reaction L-serine(in) + Na(+)(in) = L-serine(out) + Na(+)(out). The catalysed reaction is L-threonine(in) + Na(+)(in) = L-threonine(out) + Na(+)(out). Its function is as follows. Involved in the import of serine and threonine into the cell, with the concomitant import of sodium (symport system). This Neisseria meningitidis serogroup B (strain ATCC BAA-335 / MC58) protein is Serine/threonine transporter SstT.